The following is a 179-amino-acid chain: Large ribosomal subunit protein uL5 (179 aa).

The protein belongs to the universal ribosomal protein uL5 family. In terms of assembly, part of the 50S ribosomal subunit; part of the 5S rRNA/L5/L18/L25 subcomplex. Contacts the 5S rRNA and the P site tRNA. Forms a bridge to the 30S subunit in the 70S ribosome.

This is one of the proteins that bind and probably mediate the attachment of the 5S RNA into the large ribosomal subunit, where it forms part of the central protuberance. In the 70S ribosome it contacts protein S13 of the 30S subunit (bridge B1b), connecting the 2 subunits; this bridge is implicated in subunit movement. Contacts the P site tRNA; the 5S rRNA and some of its associated proteins might help stabilize positioning of ribosome-bound tRNAs. This is Large ribosomal subunit protein uL5 from Herminiimonas arsenicoxydans.